The chain runs to 241 residues: MATNAKPIYQRILLKLSGEALQGAEGFGIDASVLDRMAQEVKELVELGIQVGVVIGGGNLFRGTGLAKAGMNRVVGDHMGMLATVMNGLAMRDALHRAYVNARLMSAIPLNGVCDNYSWAEAISLLRNNRVVIFAAGTGNPFFTTDSAACLRGIEIEAEAVLKATKVDGIFSADPVKHPDATLYDQLSYQDVLEKELKVMDLAAFTLARDHNLPIRVFNMNKPGALRRVVMGDKEGTLITK.

15–18 contacts ATP; sequence KLSG. The interval 23–28 is involved in allosteric activation by GTP; it reads GAEGFG. Gly-57 provides a ligand contact to UMP. 2 residues coordinate ATP: Gly-58 and Arg-62. UMP contacts are provided by residues Asp-77 and 138–145; that span reads TGNPFFTT. ATP-binding residues include Thr-165, Phe-171, and Asp-174.

It belongs to the UMP kinase family. As to quaternary structure, homohexamer.

The protein localises to the cytoplasm. The enzyme catalyses UMP + ATP = UDP + ADP. It functions in the pathway pyrimidine metabolism; CTP biosynthesis via de novo pathway; UDP from UMP (UMPK route): step 1/1. With respect to regulation, allosterically activated by GTP. Inhibited by UTP. Its function is as follows. Catalyzes the reversible phosphorylation of UMP to UDP. The sequence is that of Uridylate kinase from Sodalis glossinidius (strain morsitans).